The following is a 261-amino-acid chain: Flagellar L-ring protein (261 aa).

Positions 1–15 (MKRLLCLLLLTTLTG) are cleaved as a signal peptide. Cysteine 16 is lipidated: N-palmitoyl cysteine. A lipid anchor (S-diacylglycerol cysteine) is attached at cysteine 16. A compositionally biased stretch (basic and acidic residues) spans 121-133 (KSADAELSKKNDS). Residues 121–140 (KSADAELSKKNDSSMDPLQV) form a disordered region.

This sequence belongs to the FlgH family. As to quaternary structure, the basal body constitutes a major portion of the flagellar organelle and consists of four rings (L,P,S, and M) mounted on a central rod.

The protein resides in the cell outer membrane. It is found in the bacterial flagellum basal body. In terms of biological role, assembles around the rod to form the L-ring and probably protects the motor/basal body from shearing forces during rotation. This is Flagellar L-ring protein from Aliivibrio salmonicida (strain LFI1238) (Vibrio salmonicida (strain LFI1238)).